We begin with the raw amino-acid sequence, 311 residues long: Regulator of rDNA transcription protein 6 (311 aa).

The next 2 membrane-spanning stretches (helical) occupy residues 32–52 and 271–291; these read PHLL…SAEL and YLIV…IIVT.

The protein resides in the membrane. Functionally, may be involved in the modulation of rDNA transcription. The sequence is that of Regulator of rDNA transcription protein 6 (RRT6) from Saccharomyces cerevisiae (strain ATCC 204508 / S288c) (Baker's yeast).